We begin with the raw amino-acid sequence, 508 residues long: Cobyric acid synthase (508 aa).

A GATase cobBQ-type domain is found at 249 to 451 (EVDVAIINLP…IHGIFENSLF (203 aa)). Cysteine 330 (nucleophile) is an active-site residue. Histidine 443 is an active-site residue.

This sequence belongs to the CobB/CobQ family. CobQ subfamily.

Its pathway is cofactor biosynthesis; adenosylcobalamin biosynthesis. Its function is as follows. Catalyzes amidations at positions B, D, E, and G on adenosylcobyrinic A,C-diamide. NH(2) groups are provided by glutamine, and one molecule of ATP is hydrogenolyzed for each amidation. The protein is Cobyric acid synthase of Caldanaerobacter subterraneus subsp. tengcongensis (strain DSM 15242 / JCM 11007 / NBRC 100824 / MB4) (Thermoanaerobacter tengcongensis).